The sequence spans 629 residues: Plastin-1 (629 aa).

At M1 the chain carries N-acetylmethionine. 2 EF-hand domains span residues 11 to 46 (EELE…ASLP) and 51 to 86 (KVRE…LKSK). Residues D24, D26, S28, Y30, E35, D64, N66, D68, K70, and E75 each contribute to the Ca(2+) site. 2 actin-binding regions span residues 108-380 (TSTI…CLHK) and 381-625 (PNNN…GKGL). Calponin-homology (CH) domains lie at 122–238 (EEEK…KVGL), 266–376 (LSPE…NTYP), 395–504 (SKEE…RRYT), and 516–625 (KVND…GKGL).

Monomer. Phosphorylated. As to expression, in small intestine, colon, and kidney; relatively lower levels of expression are detected in the lung and stomach.

It localises to the cytoplasm. The protein resides in the cell projection. It is found in the stereocilium. Actin-bundling protein. In the inner ear, it is required for stereocilia formation. Mediates liquid packing of actin filaments that is necessary for stereocilia to grow to their proper dimensions. The polypeptide is Plastin-1 (PLS1) (Homo sapiens (Human)).